The following is a 498-amino-acid chain: Ribose import ATP-binding protein RbsA 1 (498 aa).

ABC transporter domains follow at residues 7–243 (LHIQ…VGRR) and 254–496 (PRGE…IGKS). 39–46 (GENGAGKS) contacts ATP.

Belongs to the ABC transporter superfamily. Ribose importer (TC 3.A.1.2.1) family. The complex is composed of an ATP-binding protein (RbsA), two transmembrane proteins (RbsC) and a solute-binding protein (RbsB).

It localises to the cell inner membrane. The enzyme catalyses D-ribose(out) + ATP + H2O = D-ribose(in) + ADP + phosphate + H(+). In terms of biological role, part of the ABC transporter complex RbsABC involved in ribose import. Responsible for energy coupling to the transport system. This is Ribose import ATP-binding protein RbsA 1 from Pasteurella multocida (strain Pm70).